A 503-amino-acid chain; its full sequence is MEISVTTSIALATIVFFLYKLATRPKSTKKQLPEASRLPIIGHTLHQMVGSLPHRVLKNLADQYGPVMHLQIGELSAIVISSADKAKEVLNTHGVLVADRPQTTVAKIMLYNSLGATFAPYGDYLKQLRQIYALELLSPKTVRSFWTIMEDELSTMVTSVKAEAGQPIVLHDKMLTYLYDTLCRATVGSVCNGRETLIMAARETSALSAAIRIEDLFPSVKILPVISGLKTRLTNLLKQLDTVLEDIIGEREKKMFSSNNQPLTEEEDMLGVLLMYKNGKGKDAKFRITNNDIKAIVWELILAGTLSSAAIVEWCMSEMIKNPRVMKKAQDEVRQVLKDKKTVSGSDLAKLEYVKMVVKESVRLHPPAPLLFPREVREDFEMDGMIIPKKSWVIINYWAVGTDPKTWHDAVKYEPERFSNSSVDFYGSHFELIPFGAGRRICPGILFGTTNVELLLASFLYHFDWKLPGGMKPEELDMNELFGAGCVRENPLCLIPSISVAGN.

A helical; Signal-anchor for type II membrane protein membrane pass occupies residues 3-23; it reads ISVTTSIALATIVFFLYKLAT. Cys442 is a heme binding site.

It belongs to the cytochrome P450 family. It depends on heme as a cofactor. In terms of tissue distribution, highly expressed in roots. Expressed at low levels in leaves, stems and flowers.

Its subcellular location is the endoplasmic reticulum membrane. The catalysed reaction is (19E)-geissoschizine + reduced [NADPH--hemoprotein reductase] + O2 = polyneuridine aldehyde + oxidized [NADPH--hemoprotein reductase] + 2 H2O + H(+). The enzyme catalyses tetrahydroalstonine + A + reduced [NADPH--hemoprotein reductase] + O2 = alstonine + AH2 + oxidized [NADPH--hemoprotein reductase] + 2 H2O + H(+). It catalyses the reaction ajmalicine + A + reduced [NADPH--hemoprotein reductase] + O2 = serpentine + AH2 + oxidized [NADPH--hemoprotein reductase] + 2 H2O + H(+). The protein operates within alkaloid biosynthesis; ajmaline biosynthesis. Functionally, monooxygenase involved in the biosynthesis of ajmaline-type monoterpenoid indole alkaloids (MIAs) natural products, important plant-derived pharmaceuticals used in the therapy of heart disorders. Converts by cyclization the strictosidine-derived geissoschizine to the sarpagan alkaloid polyneuridine aldehyde, precursor of vomilenine, an intermediate chemical in the biosynthesis of ajmaline. Converts by aromatization the tetrahydro-beta-carboline alkaloids tetrahydroalstonine and ajmalicine to the corresponding beta-carboline alkaloids alstonine and serpentine, respectively. The sequence is that of Sarpagan bridge enzyme 1 from Rauvolfia serpentina (Serpentine wood).